Reading from the N-terminus, the 106-residue chain is UPF0060 membrane protein R01043 (106 aa).

Helical transmembrane passes span Ala-5–Leu-25, Ala-31–Val-51, Ala-61–Val-81, and His-85–Pro-105.

Belongs to the UPF0060 family.

The protein localises to the cell inner membrane. The polypeptide is UPF0060 membrane protein R01043 (Rhizobium meliloti (strain 1021) (Ensifer meliloti)).